Consider the following 386-residue polypeptide: Heat-inducible transcription repressor HrcA (386 aa).

It belongs to the HrcA family.

In terms of biological role, negative regulator of class I heat shock genes (grpE-dnaK-dnaJ and groELS operons). Prevents heat-shock induction of these operons. The protein is Heat-inducible transcription repressor HrcA of Chlamydia felis (strain Fe/C-56) (Chlamydophila felis).